Reading from the N-terminus, the 427-residue chain is Retron Mx65 reverse transcriptase (427 aa).

The Reverse transcriptase domain occupies 136-366 (RHYSIHRPRE…GAQRVTGVTV (231 aa)). 3 residues coordinate Mg(2+): D219, D315, and D316.

It belongs to the bacterial reverse transcriptase family.

The enzyme catalyses DNA(n) + a 2'-deoxyribonucleoside 5'-triphosphate = DNA(n+1) + diphosphate. Reverse transcriptase (RT) responsible for synthesis of msDNA-Mx65 (a branched molecule with RNA linked by a 2',5'-phosphodiester bond to ssDNA). The retron transcript serves as primer (from a conserved internal G residue) and template for the reaction, and codes for the RT. The retron is involved in antiviral defense. This is Retron Mx65 reverse transcriptase from Myxococcus xanthus.